The chain runs to 613 residues: Ribosome-associated molecular chaperone SSB2 (613 aa).

Ala2 carries the post-translational modification N-acetylalanine. The nucleotide binding domain (NBD) stretch occupies residues 2–391 (AEGVFQGAIG…ILTGQSTSDE (390 aa)). 16-18 (TTY) is an ATP binding site. Position 47 is a phosphothreonine (Thr47). Residues Lys73, 205–207 (GGT), 271–278 (ERAKRTLS), and Gly342 each bind ATP. The interval 392–402 (TKDLLLLDVAP) is inter-domain linker. Residues 403 to 613 (LSLGVGMQGD…RVVTKAMSSR (211 aa)) form a substrate binding domain (SBD) region. The Contributes to ribosome binding signature appears at 428–430 (KRR). Residue Thr431 is modified to Phosphothreonine. The interval 516 to 612 (SEEIEKMVNQ…KRVVTKAMSS (97 aa)) is lid domain (SBDalpha). Positions 574–582 (IEAALSDAL) match the Nuclear export signal motif. Residues 601 to 613 (GLKRVVTKAMSSR) are required for interaction with ribosomes.

This sequence belongs to the heat shock protein 70 family. Ssb-type Hsp70 subfamily. In terms of assembly, binds to ribosomes. Binds close to the ribosomal tunnel exit via contacts with both ribosomal proteins RPL35, RPL39 and RPL19, and rRNA. Directly interacts with nascent polypeptides. This interaction is dependent on the ribosome-associated complex (RAC). Interacts with SSE1.

Its subcellular location is the cytoplasm. It catalyses the reaction ATP + H2O = ADP + phosphate + H(+). In terms of biological role, ribosome-bound, Hsp70-type chaperone that assists in the cotranslational folding of newly synthesized proteins in the cytosol. Stimulates folding by interacting with nascent chains, binding to short, largely hydrophobic sequences exposed by unfolded proteins, thereby stabilizing longer, more slowly translated, and aggregation-prone nascent polypeptides and domains that cannot fold stably until fully synthesized. The Hsp70-protein substrate interaction depends on ATP-binding and on allosteric regulation between the NBD and the SBD. The ATP-bound state is characterized by a fast exchange rate of substrate (low affinity state), while in the ADP-bound state exchange is much slower (high affinity state). During the Hsp70 cycle, the chaperone switches between the ATP-bound state (open conformation) and the ADP-bound state (closed conformation) by major conformational rearrangements involving mainly the lid domain. Ssb cooperates with a specific Hsp40/Hsp70 co-chaperone termed the ribosome-associated complex (RAC), which stimulates the ATPase activity of the ribosome-associated pool of Ssbs and switches it to the high affinity substrate binding state. Hsp110 chaperone SSE1 and FES1 act as nucleotide exchange factors that cause substrate release. The polypeptide is Ribosome-associated molecular chaperone SSB2 (Saccharomyces cerevisiae (strain ATCC 204508 / S288c) (Baker's yeast)).